The primary structure comprises 325 residues: Fructose-1,6-bisphosphatase class 1 (325 aa).

Mg(2+) contacts are provided by Glu-84, Asp-103, Leu-105, and Asp-106. Substrate-binding positions include 106–109, Asn-196, and Lys-262; that span reads DGSS. Position 268 (Glu-268) interacts with Mg(2+).

This sequence belongs to the FBPase class 1 family. Homotetramer. The cofactor is Mg(2+).

The protein localises to the cytoplasm. The enzyme catalyses beta-D-fructose 1,6-bisphosphate + H2O = beta-D-fructose 6-phosphate + phosphate. Its pathway is carbohydrate biosynthesis; gluconeogenesis. This is Fructose-1,6-bisphosphatase class 1 from Shewanella baltica (strain OS195).